Here is a 274-residue protein sequence, read N- to C-terminus: uncharacterized protein (274 aa).

Belongs to the PhoU family.

This is an uncharacterized protein from Deinococcus radiodurans (strain ATCC 13939 / DSM 20539 / JCM 16871 / CCUG 27074 / LMG 4051 / NBRC 15346 / NCIMB 9279 / VKM B-1422 / R1).